Reading from the N-terminus, the 894-residue chain is Coiled-coil domain-containing protein 39 (894 aa).

Coiled-coil stretches lie at residues 32 to 143 (TENE…DQFK), 187 to 411 (ALER…LKKE), 461 to 609 (VRSE…ELKE), and 647 to 788 (KAAQ…KLRQ). Residues 844-857 (GSNPPSLGGSRPGS) are compositionally biased toward low complexity. The tract at residues 844–894 (GSNPPSLGGSRPGSARSQTSLGSVRSARSVASQQRGGMGGSPAVRTIQLGA) is disordered.

This sequence belongs to the CCDC39 family. In terms of assembly, interacts with CCDC40/FAP172. Phosphorylated in flagella.

Its subcellular location is the cell projection. It localises to the cilium. The protein resides in the flagellum. Its function is as follows. Required for assembly of dynein regulatory complex (DRC) and inner dynein arm complexes, which are responsible for ciliary beat regulation, by acting as a molecular ruler that determines the 96 nanometer (nm) repeat length and arrangements of components in cilia and flagella. Together with CCDC40/FAP172 forms a 96-nm-long complex in flagella. This complex does not act as a physical ruler, but rather act as a negative regulator for radial spokes: the complex lays along specific protofilaments, masking radial spoke binding sites and allowing recruitment of inner dynein arm (IDA) and nexin-dynein regulatory complexes (N-DRC). The protein is Coiled-coil domain-containing protein 39 (CCDC39) of Chlamydomonas reinhardtii (Chlamydomonas smithii).